Consider the following 151-residue polypeptide: Nucleoside diphosphate kinase (151 aa).

The ATP site is built by lysine 9, phenylalanine 57, arginine 85, threonine 91, arginine 102, and asparagine 112. Histidine 115 acts as the Pros-phosphohistidine intermediate in catalysis.

Belongs to the NDK family. Mg(2+) serves as cofactor.

The protein resides in the cytoplasm. The enzyme catalyses a 2'-deoxyribonucleoside 5'-diphosphate + ATP = a 2'-deoxyribonucleoside 5'-triphosphate + ADP. The catalysed reaction is a ribonucleoside 5'-diphosphate + ATP = a ribonucleoside 5'-triphosphate + ADP. In terms of biological role, major role in the synthesis of nucleoside triphosphates other than ATP. The ATP gamma phosphate is transferred to the NDP beta phosphate via a ping-pong mechanism, using a phosphorylated active-site intermediate. This chain is Nucleoside diphosphate kinase, found in Archaeoglobus fulgidus (strain ATCC 49558 / DSM 4304 / JCM 9628 / NBRC 100126 / VC-16).